Consider the following 447-residue polypeptide: Phosphoglucosamine mutase (447 aa).

Catalysis depends on serine 102, which acts as the Phosphoserine intermediate. Residues serine 102, aspartate 241, aspartate 243, and aspartate 245 each contribute to the Mg(2+) site. Serine 102 carries the post-translational modification Phosphoserine.

It belongs to the phosphohexose mutase family. Mg(2+) is required as a cofactor. Post-translationally, activated by phosphorylation.

It catalyses the reaction alpha-D-glucosamine 1-phosphate = D-glucosamine 6-phosphate. Catalyzes the conversion of glucosamine-6-phosphate to glucosamine-1-phosphate. The sequence is that of Phosphoglucosamine mutase from Pseudomonas savastanoi pv. phaseolicola (strain 1448A / Race 6) (Pseudomonas syringae pv. phaseolicola (strain 1448A / Race 6)).